The chain runs to 116 residues: Early 4 ORF3 protein (116 aa).

The protein belongs to the adenoviridae E4 ORF3 family. Homodimer. Multimerizes through C-terminus tail by reciprocal or nonreciprocal interactions. Interacts with host PML isoform 2 C-terminal disordered region. Interacts with E1B-55k; this interaction is necessary for E1B 55 kDa protein to localize to the nuclear matrix fraction of the cell. May interact with host TRIM24, CREBBP, EP300, PRKDC and the MRN complex MRE11/RAD50/NBS1; these interactions may happen through nuclear bodies complexes.

The protein resides in the host nucleus. Functionally, forms a multivalent network in host nucleus that inhibits nuclear bodies and prevents antiviral cellular activities. The network is made of multimerized dimers and surrounds adenovirus replication centers and nucleolus. Plays a role in splicing of the major late transcript. Prevents viral genome concatemer formation. The polypeptide is Early 4 ORF3 protein (Human adenovirus C serotype 2 (HAdV-2)).